The primary structure comprises 319 residues: High mobility group B protein 10 (319 aa).

Residues 1–13 (MSTDISPPYSQTH) show a composition bias toward polar residues. The disordered stretch occupies residues 1-25 (MSTDISPPYSQTHVEPVNGYPSDNK). Residues 40-131 (VRNSALFWEK…FLFQLEHVYY (92 aa)) enclose the ARID domain. The segment covering 203–220 (PSQSQQTMETPSAIVQSS) has biased composition (polar residues). Positions 203–230 (PSQSQQTMETPSAIVQSSQRRHRKKSKL) are disordered. A DNA-binding region (HMG box) is located at residues 238-305 (PKCHRSGYNF…RYRIEMLEYK (68 aa)).

In terms of tissue distribution, ubiquitously expressed.

Its subcellular location is the nucleus. Functionally, binds preferentially DNA with A/T-rich content. The protein is High mobility group B protein 10 (HMGB10) of Arabidopsis thaliana (Mouse-ear cress).